The sequence spans 372 residues: UDP-N-acetylglucosamine--N-acetylmuramyl-(pentapeptide) pyrophosphoryl-undecaprenol N-acetylglucosamine transferase (372 aa).

UDP-N-acetyl-alpha-D-glucosamine-binding positions include 21–23 (TAG), Asn-135, Arg-172, Ser-206, and Gln-303.

The protein belongs to the glycosyltransferase 28 family. MurG subfamily.

It is found in the cell membrane. The catalysed reaction is di-trans,octa-cis-undecaprenyl diphospho-N-acetyl-alpha-D-muramoyl-L-alanyl-D-glutamyl-meso-2,6-diaminopimeloyl-D-alanyl-D-alanine + UDP-N-acetyl-alpha-D-glucosamine = di-trans,octa-cis-undecaprenyl diphospho-[N-acetyl-alpha-D-glucosaminyl-(1-&gt;4)]-N-acetyl-alpha-D-muramoyl-L-alanyl-D-glutamyl-meso-2,6-diaminopimeloyl-D-alanyl-D-alanine + UDP + H(+). It participates in cell wall biogenesis; peptidoglycan biosynthesis. Its function is as follows. Cell wall formation. Catalyzes the transfer of a GlcNAc subunit on undecaprenyl-pyrophosphoryl-MurNAc-pentapeptide (lipid intermediate I) to form undecaprenyl-pyrophosphoryl-MurNAc-(pentapeptide)GlcNAc (lipid intermediate II). In Paenarthrobacter aurescens (strain TC1), this protein is UDP-N-acetylglucosamine--N-acetylmuramyl-(pentapeptide) pyrophosphoryl-undecaprenol N-acetylglucosamine transferase.